A 398-amino-acid chain; its full sequence is G2/mitotic-specific cyclin-B2 (398 aa).

Disordered regions lie at residues 1–26 and 53–76; these read MALL…KPKS and AQNT…KPTA. Phosphothreonine is present on threonine 8. Over residues 8 to 23 the composition is skewed to polar residues; that stretch reads TVSTDLENNDTGVNSK. Low complexity predominate over residues 55-69; the sequence is NTKVPVPPTKTTNVN. A phosphoserine mark is found at serine 77 and serine 92. Position 94 is a phosphothreonine (threonine 94). A phosphoserine mark is found at serine 99, serine 392, and serine 398.

This sequence belongs to the cyclin family. Cyclin AB subfamily. Interacts with the CDK1 protein kinase to form a serine/threonine kinase holoenzyme complex also known as maturation promoting factor (MPF). The cyclin subunit imparts substrate specificity to the complex.

Essential for the control of the cell cycle at the G2/M (mitosis) transition. This is G2/mitotic-specific cyclin-B2 (CCNB2) from Bos taurus (Bovine).